The sequence spans 372 residues: Germination protease (372 aa).

The propeptide occupies 1 to 15 (MNRSIDLSMYSVRTD).

The protein belongs to the peptidase A25 family. Homotetramer. Post-translationally, autoproteolytically processed. The inactive tetrameric zymogen termed p46 autoprocesses to a smaller form termed p41, which is active only during spore germination.

It carries out the reaction Endopeptidase action with P4 Glu or Asp, P1 preferably Glu &gt; Asp, P1' hydrophobic and P2' Ala.. Its function is as follows. Initiates the rapid degradation of small, acid-soluble proteins during spore germination. The polypeptide is Germination protease (Geobacillus sp. (strain WCH70)).